The chain runs to 401 residues: Enolase (401 aa).

Position 154 (Gln-154) interacts with (2R)-2-phosphoglycerate. The active-site Proton donor is the Glu-196. 3 residues coordinate Mg(2+): Asp-232, Glu-275, and Asp-302. (2R)-2-phosphoglycerate-binding residues include Lys-327, Arg-356, Ser-357, and Lys-378. Lys-327 acts as the Proton acceptor in catalysis.

It belongs to the enolase family. The cofactor is Mg(2+).

It localises to the cytoplasm. The protein localises to the secreted. It is found in the cell surface. The catalysed reaction is (2R)-2-phosphoglycerate = phosphoenolpyruvate + H2O. It functions in the pathway carbohydrate degradation; glycolysis; pyruvate from D-glyceraldehyde 3-phosphate: step 4/5. In terms of biological role, catalyzes the reversible conversion of 2-phosphoglycerate (2-PG) into phosphoenolpyruvate (PEP). It is essential for the degradation of carbohydrates via glycolysis. In Haloquadratum walsbyi (strain DSM 16790 / HBSQ001), this protein is Enolase.